A 217-amino-acid chain; its full sequence is Probable transaldolase (217 aa).

Residue Lys85 is the Schiff-base intermediate with substrate of the active site.

It belongs to the transaldolase family. Type 3B subfamily.

The protein localises to the cytoplasm. The enzyme catalyses D-sedoheptulose 7-phosphate + D-glyceraldehyde 3-phosphate = D-erythrose 4-phosphate + beta-D-fructose 6-phosphate. The protein operates within carbohydrate degradation; pentose phosphate pathway; D-glyceraldehyde 3-phosphate and beta-D-fructose 6-phosphate from D-ribose 5-phosphate and D-xylulose 5-phosphate (non-oxidative stage): step 2/3. Transaldolase is important for the balance of metabolites in the pentose-phosphate pathway. This Agathobacter rectalis (strain ATCC 33656 / DSM 3377 / JCM 17463 / KCTC 5835 / VPI 0990) (Eubacterium rectale) protein is Probable transaldolase.